The following is a 61-amino-acid chain: Probable tautomerase SERP0934 (61 aa).

Catalysis depends on Pro2, which acts as the Proton acceptor; via imino nitrogen.

This sequence belongs to the 4-oxalocrotonate tautomerase family.

This Staphylococcus epidermidis (strain ATCC 35984 / DSM 28319 / BCRC 17069 / CCUG 31568 / BM 3577 / RP62A) protein is Probable tautomerase SERP0934.